The sequence spans 313 residues: Probable cell division protein WhiA (313 aa).

The H-T-H motif DNA-binding region spans 280-313 (SLKELGAMLNPPIGKSGVNHRLKKLCSIADGLRQ).

It belongs to the WhiA family.

Its function is as follows. Involved in cell division and chromosome segregation. The chain is Probable cell division protein WhiA from Lachnoclostridium phytofermentans (strain ATCC 700394 / DSM 18823 / ISDg) (Clostridium phytofermentans).